Consider the following 279-residue polypeptide: Glycerol uptake facilitator protein (279 aa).

The Cytoplasmic portion of the chain corresponds to 1-8 (MTTAAPTP). The helical transmembrane segment at 9–37 (SLFGQCLAEFLGTALLIFFGTGCVAALKV) threads the bilayer. The Periplasmic portion of the chain corresponds to 38–42 (AGASF). Residues 43 to 63 (GLWEISIIWGVGVSMAIYLSA) traverse the membrane as a helical segment. Residues 64–66 (GVS) are Cytoplasmic-facing. An intramembrane segment occupies 67 to 70 (GAHL). The NPA 1 motif lies at 71–73 (NPA). The segment at residues 71-81 (NPAVSIALWLF) is an intramembrane region (helical). The Cytoplasmic segment spans residues 82 to 87 (AGFEGR). Residues 88 to 111 (KLPFYITAQVAGAFCAAALVYTLY) traverse the membrane as a helical segment. The Periplasmic portion of the chain corresponds to 112 to 146 (SSLFIEFEQAQNIVRGSQDSLALASVFSTYPHPAL). A helical membrane pass occupies residues 147–172 (SVGQAFLVEVVITAILMAVIMALTDD). Over 173 to 180 (GNGLPRGP) the chain is Cytoplasmic. Residues 181 to 197 (LAPLLIGLLIAVIGSAM) form a helical membrane-spanning segment. Residues 198–201 (GPLT) are Periplasmic-facing. An intramembrane segment occupies 202 to 205 (GFAM). Positions 206–208 (NPA) match the NPA 2 motif. The segment at residues 206–219 (NPARDFGPKLMTYL) is an intramembrane region (helical). The Periplasmic portion of the chain corresponds to 220–234 (AGWGPIAFTGGREIP). The chain crosses the membrane as a helical span at residues 235 to 257 (YFLVPIFAPILGACLGAGGYRVL). Topologically, residues 258-279 (IARHLPSAAAPAEAEPEKVRAS) are cytoplasmic.

Belongs to the MIP/aquaporin (TC 1.A.8) family.

It localises to the cell inner membrane. It carries out the reaction glycerol(in) = glycerol(out). Mediates glycerol diffusion across the cytoplasmic membrane via a pore-type mechanism. The polypeptide is Glycerol uptake facilitator protein (glpF) (Pseudomonas aeruginosa (strain ATCC 15692 / DSM 22644 / CIP 104116 / JCM 14847 / LMG 12228 / 1C / PRS 101 / PAO1)).